The following is a 539-amino-acid chain: Eukaryotic translation initiation factor 3 subunit L (539 aa).

Residues 306 to 514 (TFSDILLYIQ…IHIADTKVSH (209 aa)) enclose the PCI domain.

Belongs to the eIF-3 subunit L family. As to quaternary structure, component of the eukaryotic translation initiation factor 3 (eIF-3) complex. The eIF-3 complex interacts with pix.

The protein localises to the cytoplasm. Its function is as follows. Component of the eukaryotic translation initiation factor 3 (eIF-3) complex, which is involved in protein synthesis of a specialized repertoire of mRNAs and, together with other initiation factors, stimulates binding of mRNA and methionyl-tRNAi to the 40S ribosome. The eIF-3 complex specifically targets and initiates translation of a subset of mRNAs involved in cell proliferation. The protein is Eukaryotic translation initiation factor 3 subunit L of Drosophila yakuba (Fruit fly).